A 155-amino-acid polypeptide reads, in one-letter code: Ribosomal RNA large subunit methyltransferase H (155 aa).

S-adenosyl-L-methionine is bound by residues L73, G104, and 123–128 (LSPLTL).

It belongs to the RNA methyltransferase RlmH family. In terms of assembly, homodimer.

Its subcellular location is the cytoplasm. It carries out the reaction pseudouridine(1915) in 23S rRNA + S-adenosyl-L-methionine = N(3)-methylpseudouridine(1915) in 23S rRNA + S-adenosyl-L-homocysteine + H(+). Its function is as follows. Specifically methylates the pseudouridine at position 1915 (m3Psi1915) in 23S rRNA. This Pseudomonas putida (strain ATCC 700007 / DSM 6899 / JCM 31910 / BCRC 17059 / LMG 24140 / F1) protein is Ribosomal RNA large subunit methyltransferase H.